A 218-amino-acid chain; its full sequence is GTP cyclohydrolase 1 (218 aa).

3 residues coordinate Zn(2+): cysteine 111, histidine 114, and cysteine 182.

This sequence belongs to the GTP cyclohydrolase I family. In terms of assembly, toroid-shaped homodecamer, composed of two pentamers of five dimers.

The enzyme catalyses GTP + H2O = 7,8-dihydroneopterin 3'-triphosphate + formate + H(+). Its pathway is cofactor biosynthesis; 7,8-dihydroneopterin triphosphate biosynthesis; 7,8-dihydroneopterin triphosphate from GTP: step 1/1. The polypeptide is GTP cyclohydrolase 1 (Buchnera aphidicola subsp. Schizaphis graminum (strain Sg)).